Here is a 2542-residue protein sequence, read N- to C-terminus: Talin-2 (2542 aa).

Residues 88-406 (RPQKIRMLDG…GYIDIILKKK (319 aa)) enclose the FERM domain. The interval 312-406 (GVSFFLVKEK…GYIDIILKKK (95 aa)) is interaction with PIP5K1C. 4 positions are modified to phosphoserine: Ser-428, Ser-449, Ser-623, and Ser-1023. Phosphotyrosine is present on Tyr-1665. Phosphothreonine is present on Thr-1843. One can recognise an I/LWEQ domain in the interval 2294–2533 (TEWVDPEDPT…QIRQQQYKFL (240 aa)).

In terms of assembly, interacts directly with PIP5K1C.

It localises to the cytoplasm. It is found in the cell junction. The protein resides in the focal adhesion. The protein localises to the synapse. Its subcellular location is the cell membrane. It localises to the cytoskeleton. Functionally, as a major component of focal adhesion plaques that links integrin to the actin cytoskeleton, may play an important role in cell adhesion. Recruits PIP5K1C to focal adhesion plaques and strongly activates its kinase activity. This Homo sapiens (Human) protein is Talin-2 (TLN2).